A 420-amino-acid polypeptide reads, in one-letter code: MKTLIARHKAGEHIGICSVCSAHPLVIEAALAFDRNSTRKVLIEATSNQVNQFGGYTCMTPADFREFVFAIADRVGFARERIILGGDHLGPNCWQQENADAAMEKSVELVKAYVRAGFSKIHLDASMSCAGDPIPLAPETVAERAAVLCFAAESVATDCQREQLSYVIGTEVPVPGGEASAIQSVHITHVEDAANTLRTHQKAFIARGLAEALTRVIAIVVQPGVEFDHSNIIHYQPQEAQPLAQWIENTRMVYEAHSTDYQTRTAYWELVRDHFAILKVGPALTFALREAIFALAQIEQELIAPENRSGCLAVIEEVMLDEPQYWKKYYRPGFNDSLLDIRYSLSDRIRYYWPHSRIKNSVETMMVNLEGMEIPLGMISQYLPKQFERIQSGELSAIPHQLIMDKIYDVLRAYRYGCAE.

This sequence belongs to the GatZ/KbaZ family. GatZ subfamily. In terms of assembly, forms a complex with GatY.

It functions in the pathway carbohydrate metabolism; D-tagatose 6-phosphate degradation; D-glyceraldehyde 3-phosphate and glycerone phosphate from D-tagatose 6-phosphate: step 2/2. In terms of biological role, component of the tagatose-1,6-bisphosphate aldolase GatYZ that is required for full activity and stability of the Y subunit. Could have a chaperone-like function for the proper and stable folding of GatY. When expressed alone, GatZ does not show any aldolase activity. Is involved in the catabolism of galactitol. This is D-tagatose-1,6-bisphosphate aldolase subunit GatZ from Escherichia coli O17:K52:H18 (strain UMN026 / ExPEC).